Here is a 615-residue protein sequence, read N- to C-terminus: Cilia- and flagella-associated protein 52 (615 aa).

11 WD repeats span residues 54-98 (GHSD…LIHR), 101-142 (LHKV…AICG), 145-184 (CNTNFTNCVKFFNNSPDKLITAGNFNMNVWTYDAGNNKLR), 232-275 (GPAK…AGTK), 320-359 (AHNDKINGMAFPNEYSEVFATCGTGFIRLWHLTTCRELLR), 362-401 (VPNLECFCIAFTTDGSAILSGWSDGKIRAFGPQSGKIIFT), 405-444 (AHQKAVTAIASTADSSRILSGGEEGMVRVWRIGRTSQTLE), 449-488 (DHKGPVNCIRIKGSGDECVSASSDGSCILWDLHTFKRRTS), 490-529 (FANTFFKSVVYHPDESQLVTAGTDRKVTYWDAYDGNAIRI), 533-572 (SDLDEVNALAVDRDGEALVSGGGDKLVKLWGYDEGHCYFV), and 575-614 (AHSGAITAVGVTPDKQRIVSVGTEGGIFIWDYQRPQTLAD).

Belongs to the CFAP52 family.

Its subcellular location is the cytoplasm. The protein resides in the cell projection. The protein localises to the cilium. It localises to the flagellum. In terms of biological role, may play a role in cell growth and/or survival. The polypeptide is Cilia- and flagella-associated protein 52 (Chlamydomonas reinhardtii (Chlamydomonas smithii)).